The primary structure comprises 309 residues: Aspartate carbamoyltransferase catalytic subunit (309 aa).

Residues arginine 55 and threonine 56 each coordinate carbamoyl phosphate. Lysine 85 provides a ligand contact to L-aspartate. Arginine 106, histidine 135, and glutamine 138 together coordinate carbamoyl phosphate. The L-aspartate site is built by arginine 168 and arginine 230. The carbamoyl phosphate site is built by leucine 268 and proline 269.

It belongs to the aspartate/ornithine carbamoyltransferase superfamily. ATCase family. Heterododecamer (2C3:3R2) of six catalytic PyrB chains organized as two trimers (C3), and six regulatory PyrI chains organized as three dimers (R2).

It catalyses the reaction carbamoyl phosphate + L-aspartate = N-carbamoyl-L-aspartate + phosphate + H(+). It functions in the pathway pyrimidine metabolism; UMP biosynthesis via de novo pathway; (S)-dihydroorotate from bicarbonate: step 2/3. In terms of biological role, catalyzes the condensation of carbamoyl phosphate and aspartate to form carbamoyl aspartate and inorganic phosphate, the committed step in the de novo pyrimidine nucleotide biosynthesis pathway. This is Aspartate carbamoyltransferase catalytic subunit from Vibrio campbellii (strain ATCC BAA-1116).